Here is a 405-residue protein sequence, read N- to C-terminus: Cytoplasmic tRNA 2-thiolation protein 2 (405 aa).

It belongs to the CTU2/NCS2 family.

Its subcellular location is the cytoplasm. Its pathway is tRNA modification; 5-methoxycarbonylmethyl-2-thiouridine-tRNA biosynthesis. Functionally, plays a central role in 2-thiolation of mcm(5)S(2)U at tRNA wobble positions of tRNA(Lys), tRNA(Glu) and tRNA(Gln). May act by forming a heterodimer with NCS6/CTU1 that ligates sulfur from thiocarboxylated URM1 onto the uridine of tRNAs at wobble position. This is Cytoplasmic tRNA 2-thiolation protein 2 from Drosophila persimilis (Fruit fly).